A 270-amino-acid polypeptide reads, in one-letter code: Orotidine 5'-phosphate decarboxylase (270 aa).

Residues Asp-43, 65–67, 96–105, Tyr-217, and Arg-236 each bind substrate; these read KTH and DRKFGDIGST. The Proton donor role is filled by Lys-98.

Belongs to the OMP decarboxylase family.

It carries out the reaction orotidine 5'-phosphate + H(+) = UMP + CO2. It functions in the pathway pyrimidine metabolism; UMP biosynthesis via de novo pathway; UMP from orotate: step 2/2. This chain is Orotidine 5'-phosphate decarboxylase (URA3), found in Aureobasidium pullulans (Black yeast).